The primary structure comprises 212 residues: Metalloproteinase inhibitor 3 (212 aa).

Residues 1–24 (MTAWLGFLAVFLCSWSLRDLVAEA) form the signal peptide. A Zn(2+)-binding site is contributed by cysteine 25. Involved in metalloproteinase-binding regions lie at residues 25–28 (CTCV) and 89–90 (ES). 6 disulfide bridges follow: cysteine 25/cysteine 92, cysteine 27/cysteine 119, cysteine 37/cysteine 144, cysteine 146/cysteine 193, cysteine 151/cysteine 156, and cysteine 164/cysteine 185. In terms of domain architecture, NTR spans 25-144 (CTCVPIHPQD…GLNHRYHLGC (120 aa)).

The protein belongs to the protease inhibitor I35 (TIMP) family.

It localises to the secreted. Its subcellular location is the extracellular space. It is found in the extracellular matrix. Functionally, complexes with metalloproteinases (such as collagenases) and irreversibly inactivates them by binding to their catalytic zinc cofactor. May form part of a tissue-specific acute response to remodeling stimuli. This Gallus gallus (Chicken) protein is Metalloproteinase inhibitor 3 (TIMP3).